The following is a 448-amino-acid chain: Trigger factor (448 aa).

The PPIase FKBP-type domain occupies 172–257; the sequence is GDRVTVDFVG…MKKIEWPHMP (86 aa).

Belongs to the FKBP-type PPIase family. Tig subfamily.

It is found in the cytoplasm. The catalysed reaction is [protein]-peptidylproline (omega=180) = [protein]-peptidylproline (omega=0). In terms of biological role, involved in protein export. Acts as a chaperone by maintaining the newly synthesized protein in an open conformation. Functions as a peptidyl-prolyl cis-trans isomerase. This Burkholderia vietnamiensis (strain G4 / LMG 22486) (Burkholderia cepacia (strain R1808)) protein is Trigger factor.